The primary structure comprises 504 residues: D-alanine--D-alanyl carrier protein ligase (504 aa).

152-153 provides a ligand contact to ATP; the sequence is TS. A D-alanine-binding site is contributed by Asp-197. 292 to 297 contributes to the ATP binding site; the sequence is NTYGPT. Val-301 lines the D-alanine pocket. ATP-binding positions include Asp-383, 394–397, and Lys-492; that span reads YNGR. Lys-492 contributes to the D-alanine binding site.

It belongs to the ATP-dependent AMP-binding enzyme family. DltA subfamily.

Its subcellular location is the cytoplasm. It catalyses the reaction holo-[D-alanyl-carrier protein] + D-alanine + ATP = D-alanyl-[D-alanyl-carrier protein] + AMP + diphosphate. Its pathway is cell wall biogenesis; lipoteichoic acid biosynthesis. In terms of biological role, catalyzes the first step in the D-alanylation of lipoteichoic acid (LTA), the activation of D-alanine and its transfer onto the D-alanyl carrier protein (Dcp) DltC. In an ATP-dependent two-step reaction, forms a high energy D-alanyl-AMP intermediate, followed by transfer of the D-alanyl residue as a thiol ester to the phosphopantheinyl prosthetic group of the Dcp. D-alanylation of LTA plays an important role in modulating the properties of the cell wall in Gram-positive bacteria, influencing the net charge of the cell wall. This is D-alanine--D-alanyl carrier protein ligase from Bacillus cereus (strain Q1).